The chain runs to 273 residues: NAD-dependent protein deacylase (273 aa).

The 269-residue stretch at 1-269 folds into the Deacetylase sirtuin-type domain; that stretch reads MNLDNAIHEA…PRIVEQVKKI (269 aa). NAD(+) contacts are provided by residues 25–44 and 107–110; these read GAGV…GGVW and QNID. The active-site Proton acceptor is His125. Cys133, Cys136, Cys173, and Cys176 together coordinate Zn(2+). NAD(+) contacts are provided by residues 211 to 213, 237 to 239, and Thr255; these read GTS and NPN.

It belongs to the sirtuin family. Class III subfamily. Zn(2+) is required as a cofactor.

The protein resides in the cytoplasm. It carries out the reaction N(6)-acetyl-L-lysyl-[protein] + NAD(+) + H2O = 2''-O-acetyl-ADP-D-ribose + nicotinamide + L-lysyl-[protein]. In terms of biological role, NAD-dependent protein deacetylase which modulates the activities of several proteins which are inactive in their acetylated form. The chain is NAD-dependent protein deacylase (cobB) from Desulfosudis oleivorans (strain DSM 6200 / JCM 39069 / Hxd3) (Desulfococcus oleovorans).